The sequence spans 376 residues: N-acetyldiaminopimelate deacetylase (376 aa).

The active site involves D69. E128 functions as the Proton acceptor in the catalytic mechanism.

It belongs to the peptidase M20A family. N-acetyldiaminopimelate deacetylase subfamily.

The catalysed reaction is N-acetyl-(2S,6S)-2,6-diaminopimelate + H2O = (2S,6S)-2,6-diaminopimelate + acetate. Its pathway is amino-acid biosynthesis; L-lysine biosynthesis via DAP pathway; LL-2,6-diaminopimelate from (S)-tetrahydrodipicolinate (acetylase route): step 3/3. Functionally, catalyzes the conversion of N-acetyl-diaminopimelate to diaminopimelate and acetate. This is N-acetyldiaminopimelate deacetylase from Streptococcus pneumoniae (strain Taiwan19F-14).